We begin with the raw amino-acid sequence, 167 residues long: Xanthine-guanine phosphoribosyltransferase (167 aa).

Residues Arg47–Gly48, Gln79, and Asp102–Thr110 contribute to the 5-phospho-alpha-D-ribose 1-diphosphate site. A GMP-binding site is contributed by Gln79. Asp103 provides a ligand contact to Mg(2+). The guanine site is built by Asp106 and Ile149. Xanthine contacts are provided by Asp106 and Ile149. GMP-binding positions include Asp106–Thr110 and Trp148–Ile149.

It belongs to the purine/pyrimidine phosphoribosyltransferase family. XGPT subfamily. Homotetramer. Requires Mg(2+) as cofactor.

The protein localises to the cell inner membrane. The catalysed reaction is GMP + diphosphate = guanine + 5-phospho-alpha-D-ribose 1-diphosphate. It catalyses the reaction XMP + diphosphate = xanthine + 5-phospho-alpha-D-ribose 1-diphosphate. It carries out the reaction IMP + diphosphate = hypoxanthine + 5-phospho-alpha-D-ribose 1-diphosphate. The protein operates within purine metabolism; GMP biosynthesis via salvage pathway; GMP from guanine: step 1/1. It participates in purine metabolism; XMP biosynthesis via salvage pathway; XMP from xanthine: step 1/1. Purine salvage pathway enzyme that catalyzes the transfer of the ribosyl-5-phosphate group from 5-phospho-alpha-D-ribose 1-diphosphate (PRPP) to the N9 position of the 6-oxopurines guanine and xanthine to form the corresponding ribonucleotides GMP (guanosine 5'-monophosphate) and XMP (xanthosine 5'-monophosphate), with the release of PPi. To a lesser extent, also acts on hypoxanthine. This Cereibacter sphaeroides (strain ATCC 17025 / ATH 2.4.3) (Rhodobacter sphaeroides) protein is Xanthine-guanine phosphoribosyltransferase.